The primary structure comprises 125 residues: Large ribosomal subunit protein bL12 (125 aa).

The protein belongs to the bacterial ribosomal protein bL12 family. Homodimer. Part of the ribosomal stalk of the 50S ribosomal subunit. Forms a multimeric L10(L12)X complex, where L10 forms an elongated spine to which 2 to 4 L12 dimers bind in a sequential fashion. Binds GTP-bound translation factors.

In terms of biological role, forms part of the ribosomal stalk which helps the ribosome interact with GTP-bound translation factors. Is thus essential for accurate translation. The polypeptide is Large ribosomal subunit protein bL12 (Gluconacetobacter diazotrophicus (strain ATCC 49037 / DSM 5601 / CCUG 37298 / CIP 103539 / LMG 7603 / PAl5)).